A 788-amino-acid polypeptide reads, in one-letter code: IQ motif and ubiquitin-like domain-containing protein (788 aa).

Positions M1–D89 are disordered. Over residues E7 to G20 the composition is skewed to basic and acidic residues. The segment covering E31–E54 has biased composition (acidic residues). Over residues K68 to V78 the composition is skewed to basic and acidic residues. A compositionally biased stretch (polar residues) spans S80–D89. The region spanning A127–P203 is the Ubiquitin-like domain. In terms of domain architecture, IQ spans R334 to L363.

As to quaternary structure, component of the axonemal radial spoke 1 (RS1) complex, at least composed of spoke head proteins RSPH1, RSPH3B, RSPH9 and the cilia-specific component RSPH4A or sperm-specific component RSPH6A, spoke stalk proteins RSPH14, DNAJB13, DYDC1, ROPN1L and NME5, and the anchor protein IQUB. Does not appear to be part of radial spoke complexes 2 or 3 (RS2 or RS3). Interacts with CALM1. Interacts with DNAJB13. Interacts with DYNLL2. Interacts with NME5. Interacts with RSPH3. Interacts with RSPH9. Interacts with ZMYND10. Interacts with calmodulin; the interaction occurs in conditions of low but not high calcium. As to expression, expressed in the flagellum of sperm cells and cilia of tracheal epithelial cells (at protein level). High expression in testis, also present in brain and lung.

It is found in the cytoplasm. It localises to the cytoskeleton. Its subcellular location is the flagellum axoneme. The protein resides in the cell projection. The protein localises to the cilium. Anchors the radial spoke 1 (RS1) complex to the A microtubule of outer doublet microtubules in axonemes. The triple radial spokes (RS1, RS2 and RS3) are required to modulate beating of the sperm flagellum. May play a role in inhibiting signaling via MAPK1/ERK2 and MAPK3/ERK1. Additionally, may play a role in the functioning of cilia. Not required for the functioning of tracheal or ependymal cilia. This chain is IQ motif and ubiquitin-like domain-containing protein (Iqub), found in Mus musculus (Mouse).